The chain runs to 258 residues: uncharacterized protein (258 aa).

36-43 (GKAGTGKS) contributes to the ATP binding site.

Belongs to the IIV-6 075L family.

This is an uncharacterized protein from Acheta domesticus (House cricket).